Here is a 331-residue protein sequence, read N- to C-terminus: Probable mannose-1-phosphate guanylyltransferase 3 (331 aa).

Lys3 is a binding site for diphosphate. Positions 66, 90, 92, 127, and 154 each coordinate GDP-alpha-D-mannose.

It belongs to the transferase hexapeptide repeat family.

The catalysed reaction is alpha-D-mannose 1-phosphate + GTP + H(+) = GDP-alpha-D-mannose + diphosphate. The protein operates within nucleotide-sugar biosynthesis; GDP-alpha-D-mannose biosynthesis; GDP-alpha-D-mannose from alpha-D-mannose 1-phosphate (GTP route): step 1/1. In terms of biological role, catalyzes a reaction of the Smirnoff-Wheeler pathway, the major route to ascorbate biosynthesis in plants. The sequence is that of Probable mannose-1-phosphate guanylyltransferase 3 from Arabidopsis thaliana (Mouse-ear cress).